The following is a 526-amino-acid chain: Peptide chain release factor 3 (526 aa).

The region spanning 11 to 277 (SKRRTFAIIS…SLIKWAPSPL (267 aa)) is the tr-type G domain. Residues 20–27 (SHPDAGKT), 88–92 (DTPGH), and 142–145 (NKLD) each bind GTP.

The protein belongs to the TRAFAC class translation factor GTPase superfamily. Classic translation factor GTPase family. PrfC subfamily.

Its subcellular location is the cytoplasm. Increases the formation of ribosomal termination complexes and stimulates activities of RF-1 and RF-2. It binds guanine nucleotides and has strong preference for UGA stop codons. It may interact directly with the ribosome. The stimulation of RF-1 and RF-2 is significantly reduced by GTP and GDP, but not by GMP. The polypeptide is Peptide chain release factor 3 (Buchnera aphidicola subsp. Acyrthosiphon pisum (strain Tuc7)).